Consider the following 1103-residue polypeptide: A disintegrin and metalloproteinase with thrombospondin motifs 10 (1103 aa).

The first 25 residues, 1-25, serve as a signal peptide directing secretion; that stretch reads MAPACQILRWALALGLGLMFEVTHA. Positions 26 to 233 are excised as a propeptide; that stretch reads FRSQDEFLSS…TERGQPGLKR (208 aa). 3 N-linked (GlcNAc...) asparagine glycosylation sites follow: asparagine 90, asparagine 222, and asparagine 323. The tract at residues 213–233 is disordered; sequence KPPPARPLGNETERGQPGLKR. The Peptidase M12B domain maps to 239 to 457; sequence RYVETLVVAD…GLGLCLNNRP (219 aa). 11 disulfide bridges follow: cysteine 315–cysteine 376, cysteine 351–cysteine 358, cysteine 370–cysteine 452, cysteine 409–cysteine 436, cysteine 479–cysteine 501, cysteine 490–cysteine 508, cysteine 496–cysteine 531, cysteine 521–cysteine 536, cysteine 559–cysteine 596, cysteine 563–cysteine 601, and cysteine 574–cysteine 586. Zn(2+) is bound at residue histidine 392. The active site involves glutamate 393. Zn(2+) contacts are provided by histidine 396 and histidine 402. Positions 460 to 546 constitute a Disintegrin domain; the sequence is QDFVYPTVAP…VPFGSRPEGV (87 aa). Residues 547 to 602 enclose the TSP type-1 1 domain; sequence DGAWGPWTPWGDCSRTCGGGVSSSSRHCDSPRPTIGGKYCLGERRRHRSCNTDDCP. The spacer stretch occupies residues 706 to 828; the sequence is ETIEGVFSPA…IARDSLPPYS (123 aa). N-linked (GlcNAc...) asparagine glycans are attached at residues asparagine 740 and asparagine 795. 4 consecutive TSP type-1 domains span residues 825 to 883, 884 to 945, 947 to 1001, and 1003 to 1058; these read PPYS…NTEP, CPPD…PTCP, EWAA…NLRR, and PPAR…AKCD. A glycan (N-linked (GlcNAc...) asparagine) is linked at asparagine 892. Residues 1065–1103 enclose the PLAC domain; the sequence is GPEECKDVNKVAYCPLVLKFQFCSRAYFRQMCCKTCHGH.

Interacts with FBN1; this interaction promotes microfibrils assembly. The cofactor is Zn(2+). Post-translationally, glycosylated. Can be O-fucosylated by POFUT2 on a serine or a threonine residue found within the consensus sequence C1-X(2)-(S/T)-C2-G of the TSP type-1 repeat domains where C1 and C2 are the first and second cysteine residue of the repeat, respectively. Fucosylated repeats can then be further glycosylated by the addition of a beta-1,3-glucose residue by the glucosyltransferase, B3GALTL. Fucosylation mediates the efficient secretion of ADAMTS family members. Can also be C-glycosylated with one or two mannose molecules on tryptophan residues within the consensus sequence W-X-X-W of the TPRs, and N-glycosylated. These other glycosylations can also facilitate secretion. In terms of tissue distribution, widely expressed in adult tissues.

The protein resides in the secreted. It is found in the extracellular space. It localises to the extracellular matrix. Metalloprotease that participate in microfibrils assembly. Microfibrils are extracellular matrix components occurring independently or along with elastin in the formation of elastic tissues. The chain is A disintegrin and metalloproteinase with thrombospondin motifs 10 (ADAMTS10) from Homo sapiens (Human).